A 377-amino-acid polypeptide reads, in one-letter code: Nitric oxide reductase FlRd-NAD(+) reductase (377 aa).

The protein belongs to the FAD-dependent oxidoreductase family. The cofactor is FAD.

The protein resides in the cytoplasm. The catalysed reaction is 2 reduced [nitric oxide reductase rubredoxin domain] + NAD(+) + H(+) = 2 oxidized [nitric oxide reductase rubredoxin domain] + NADH. It participates in nitrogen metabolism; nitric oxide reduction. Its function is as follows. One of at least two accessory proteins for anaerobic nitric oxide (NO) reductase. Reduces the rubredoxin moiety of NO reductase. The chain is Nitric oxide reductase FlRd-NAD(+) reductase from Escherichia coli (strain K12 / MC4100 / BW2952).